A 285-amino-acid chain; its full sequence is NAD kinase (285 aa).

Catalysis depends on aspartate 68, which acts as the Proton acceptor. NAD(+)-binding positions include 68-69 (DG), 142-143 (ND), arginine 153, lysine 170, aspartate 172, and glutamine 242.

This sequence belongs to the NAD kinase family. The cofactor is a divalent metal cation.

The protein localises to the cytoplasm. It catalyses the reaction NAD(+) + ATP = ADP + NADP(+) + H(+). Involved in the regulation of the intracellular balance of NAD and NADP, and is a key enzyme in the biosynthesis of NADP. Catalyzes specifically the phosphorylation on 2'-hydroxyl of the adenosine moiety of NAD to yield NADP. In Koribacter versatilis (strain Ellin345), this protein is NAD kinase.